The following is a 298-amino-acid chain: Proton-activated chloride channel (298 aa).

The Cytoplasmic portion of the chain corresponds to methionine 1–asparagine 12. A helical membrane pass occupies residues valine 13–alanine 33. Over tyrosine 34 to aspartate 245 the chain is Extracellular. The helical transmembrane segment at isoleucine 246–phenylalanine 266 threads the bilayer. Topologically, residues lysine 267–serine 298 are cytoplasmic.

This sequence belongs to the proton-activated chloride channel family.

Its subcellular location is the cell membrane. The catalysed reaction is chloride(in) = chloride(out). Its function is as follows. Chloride channel gated by pH that facilitates the entry of chloride ions into cells upon exposure to extracellular acidic pH. Displays channel activity with distinct kinetic properties compared to the human ortholog channel. This chain is Proton-activated chloride channel, found in Danio rerio (Zebrafish).